A 323-amino-acid chain; its full sequence is tRNA-modifying protein YgfZ (323 aa).

2 residues coordinate folate: W29 and W182.

It belongs to the tRNA-modifying YgfZ family.

Its subcellular location is the cytoplasm. Functionally, folate-binding protein involved in regulating the level of ATP-DnaA and in the modification of some tRNAs. It is probably a key factor in regulatory networks that act via tRNA modification, such as initiation of chromosomal replication. In Vibrio cholerae serotype O1 (strain M66-2), this protein is tRNA-modifying protein YgfZ.